A 659-amino-acid polypeptide reads, in one-letter code: Mitochondrial Rho GTPase 1 (659 aa).

Residues 1-631 lie on the Cytoplasmic side of the membrane; it reads MTKTRIRIVV…LTNDIDYRQT (631 aa). Residues 3–183 enclose the Miro 1 domain; it reads KTRIRIVVCG…FYLCQRTITN (181 aa). Residues 12-19, 61-63, and 115-118 each bind GTP; these read GDSGVGKT, DTG, and NKCD. EF-hand domains are found at residues 199–234 and 328–363; these read LGVLALKRVFVLSDMDQDGFLNDDEITKLQKKCFSK and LGYRFFVDTFLKYDKDNDGGLNNDELHLLFKTTPGL. Ca(2+) contacts are provided by Asp212, Asp214, Asp216, Glu223, Asp341, Asp343, Asp345, and Glu352. The Miro 2 domain occupies 444-609; it reads RKVLNCYMLG…FIKLTEVALE (166 aa). GTP contacts are provided by residues 453–460, 489–493, and 558–561; these read GKGNSGKS, ELKGG, and LKAD. Residues 632 to 652 traverse the membrane as a helical; Anchor for type IV membrane protein segment; sequence IVAISSVVGFASLFTFTALKI. Topologically, residues 653 to 659 are mitochondrial intermembrane; that stretch reads YSSFKNT.

The protein belongs to the mitochondrial Rho GTPase family.

Its subcellular location is the mitochondrion outer membrane. Mitochondrial GTPase involved in mitochondrial trafficking. Probably involved in control of anterograde transport of mitochondria and their subcellular distribution. This chain is Mitochondrial Rho GTPase 1 (GEM1), found in Kluyveromyces lactis (strain ATCC 8585 / CBS 2359 / DSM 70799 / NBRC 1267 / NRRL Y-1140 / WM37) (Yeast).